Here is an 856-residue protein sequence, read N- to C-terminus: Dual specificity protein kinase TTK (856 aa).

Met1 bears the N-acetylmethionine mark. Residue Thr32 is modified to Phosphothreonine. 3 positions are modified to phosphoserine: Ser36, Ser277, and Ser342. Thr380 is modified (phosphothreonine). Phosphoserine is present on residues Ser383, Ser435, and Ser454. The Protein kinase domain occupies 524–790 (YSILKQIGSG…IPELLTHPYV (267 aa)). Residues 530–538 (IGSGGSSKV) and Lys552 each bind ATP. The Proton acceptor role is filled by Asp646. Ser820 bears the Phosphoserine mark. A disordered region spans residues 837 to 856 (CGEGQDSSSSKTFDKKRERK).

The protein belongs to the protein kinase superfamily. Ser/Thr protein kinase family. Interacts with TPR; the interactions occurs in a microtubule-independent manner. Interacts with MAD1L1 and MAD2L1. Autophosphorylated. As to expression, present in rapidly proliferating cell lines; high levels in testis, bone marrow, spleen and thymus. Low levels in brain, heart, lung and kidney.

It carries out the reaction L-seryl-[protein] + ATP = O-phospho-L-seryl-[protein] + ADP + H(+). It catalyses the reaction L-threonyl-[protein] + ATP = O-phospho-L-threonyl-[protein] + ADP + H(+). The catalysed reaction is L-tyrosyl-[protein] + ATP = O-phospho-L-tyrosyl-[protein] + ADP + H(+). Its activity is regulated as follows. Inhibited by the ATP-competitive kinase inhibitor, SP600125. In terms of biological role, involved in mitotic spindle assembly checkpoint signaling, a process that delays anaphase until chromosomes are bioriented on the spindle, and in the repair of incorrect mitotic kinetochore-spindle microtubule attachments. Phosphorylates MAD1L1 to promote the mitotic spindle assembly checkpoint. Phosphorylates CDCA8/Borealin leading to enhanced AURKB activity at the kinetochore. Phosphorylates SKA3 at 'Ser-34' leading to dissociation of the SKA complex from microtubules and destabilization of microtubule-kinetochore attachments. Phosphorylates KNL1, KNTC1 and autophosphorylates. Phosphorylates MCRS1 which enhances recruitment of KIF2A to the minus end of spindle microtubules and promotes chromosome alignment. This chain is Dual specificity protein kinase TTK (Ttk), found in Mus musculus (Mouse).